A 399-amino-acid polypeptide reads, in one-letter code: Interferon regulatory factor 9 (399 aa).

A DNA-binding region (IRF tryptophan pentad repeat) is located at residues 9-116 (TRKLRSWIVE…EPYKVYRILP (108 aa)). The segment at 118–189 (GTLPNQPRNQ…CNSELEEGAG (72 aa)) is disordered. Polar residues predominate over residues 120–129 (LPNQPRNQKS). Ser-139 is modified (phosphoserine). Residues 148–157 (NGRTNGVVNH) show a composition bias toward polar residues. Residues 171–189 (SNRSDSNSNCNSELEEGAG) are compositionally biased toward low complexity. Ser-393 is subject to Phosphoserine.

Belongs to the IRF family. In terms of assembly, interacts with STAT2 in the cytoplasm. Forms the interferon-stimulated gene factor 3 complex (ISGF3) with the heterodimer STAT1:STAT2; upon stimulation.

The protein localises to the nucleus. Its function is as follows. Transcription factor that plays an essential role in anti-viral immunity. It mediates signaling by type I IFNs (IFN-alpha and IFN-beta). Following type I IFN binding to cell surface receptors, Jak kinases (TYK2 and JAK1) are activated, leading to tyrosine phosphorylation of STAT1 and STAT2. IRF9/ISGF3G associates with the phosphorylated STAT1:STAT2 dimer to form a complex termed ISGF3 transcription factor, that enters the nucleus. ISGF3 binds to the IFN stimulated response element (ISRE) to activate the transcription of interferon stimulated genes, which drive the cell in an antiviral state. This chain is Interferon regulatory factor 9 (Irf9), found in Mus musculus (Mouse).